A 515-amino-acid polypeptide reads, in one-letter code: Bifunctional purine biosynthesis protein PurH (515 aa).

Positions 1–145 (MTKRVLISVS…KNHASVTVVV (145 aa)) constitute an MGS-like domain.

Belongs to the PurH family.

It catalyses the reaction (6R)-10-formyltetrahydrofolate + 5-amino-1-(5-phospho-beta-D-ribosyl)imidazole-4-carboxamide = 5-formamido-1-(5-phospho-D-ribosyl)imidazole-4-carboxamide + (6S)-5,6,7,8-tetrahydrofolate. The enzyme catalyses IMP + H2O = 5-formamido-1-(5-phospho-D-ribosyl)imidazole-4-carboxamide. It participates in purine metabolism; IMP biosynthesis via de novo pathway; 5-formamido-1-(5-phospho-D-ribosyl)imidazole-4-carboxamide from 5-amino-1-(5-phospho-D-ribosyl)imidazole-4-carboxamide (10-formyl THF route): step 1/1. The protein operates within purine metabolism; IMP biosynthesis via de novo pathway; IMP from 5-formamido-1-(5-phospho-D-ribosyl)imidazole-4-carboxamide: step 1/1. This chain is Bifunctional purine biosynthesis protein PurH, found in Streptococcus pneumoniae (strain JJA).